The primary structure comprises 627 residues: tRNA uridine 5-carboxymethylaminomethyl modification enzyme MnmG (627 aa).

Residues 13–18, Val125, and Ser180 contribute to the FAD site; that span reads GGGHAG. 274-288 contacts NAD(+); sequence GPRYCPSIEDKVVRF. Gln371 serves as a coordination point for FAD.

The protein belongs to the MnmG family. As to quaternary structure, homodimer. Heterotetramer of two MnmE and two MnmG subunits. The cofactor is FAD.

It localises to the cytoplasm. NAD-binding protein involved in the addition of a carboxymethylaminomethyl (cmnm) group at the wobble position (U34) of certain tRNAs, forming tRNA-cmnm(5)s(2)U34. The sequence is that of tRNA uridine 5-carboxymethylaminomethyl modification enzyme MnmG from Francisella tularensis subsp. tularensis (strain WY96-3418).